The sequence spans 396 residues: KiSS-1 receptor (396 aa).

Residues 1-43 (MATEATLAPNVTWWAPSNASGCPGCGVNASDDPGSAPRPLDAW) lie on the Extracellular side of the membrane. N-linked (GlcNAc...) asparagine glycans are attached at residues Asn-10, Asn-18, and Asn-28. A helical transmembrane segment spans residues 44-66 (LVPLFFATLMLLGLVGNSLVIYV). The Cytoplasmic segment spans residues 67-78 (ICRHKHMQTVTN). Residues 79-101 (FYIANLAATDVTFLLCCVPFTAL) traverse the membrane as a helical segment. Residues 102-116 (LYPLPAWVLGDFMCK) are Extracellular-facing. Cys-115 and Cys-191 are oxidised to a cystine. A helical transmembrane segment spans residues 117-138 (FVNYIQQVSVQATCATLTAMSV). Residues 139–157 (DRWYVTVFPLRALHRRTPR) are Cytoplasmic-facing. A helical transmembrane segment spans residues 158–180 (LALAVSLSIWVGSAAVSAPVLAL). At 181 to 203 (HRLSPGPRTYCSEAFPSRALERA) the chain is on the extracellular side. Residues 204 to 224 (FALYNLLALYLLPLLATCACY) traverse the membrane as a helical segment. Residues 225–260 (GAMLRHLGRAAVRPAPTDGALQGQLLAQRAGAVRTK) are Cytoplasmic-facing. The chain crosses the membrane as a helical span at residues 261 to 283 (VSRLVAAVVLLFAACWGPIQLFL). Residues 284-305 (VLQALGPSGAWHPRSYAAYAVK) are Extracellular-facing. The helical transmembrane segment at 306–330 (IWAHCMSYSNSALNPLLYAFLGSHF) threads the bilayer. Over 331–396 (RQAFCRVCPC…CAQSERTASL (66 aa)) the chain is Cytoplasmic. The tract at residues 349–396 (HTSAHSDRAATHTVPHSRAAHPVRIRSPEPGNPVVRSPCAQSERTASL) is disordered. A compositionally biased stretch (polar residues) spans 387-396 (CAQSERTASL).

The protein belongs to the G-protein coupled receptor 1 family. As to expression, highest level in the heart and 15- and 17-day embryos. Low level in other tissues. Colocalized with gonadotropin-releasing hormone (GnRH) neurons in the hypothalamus.

The protein resides in the cell membrane. Receptor for metastin (kisspeptin-52 or kp-52), a C-terminally amidated peptide of KiSS1. KiSS1 is a metastasis suppressor protein. Activation of the receptor inhibits cell proliferation and cell migration, key characteristics of tumor metastasis. The receptor is essential for normal gonadotropin-released hormone physiology and for puberty. The hypothalamic KiSS1/KISS1R system is a pivotal factor in central regulation of the gonadotropic axis at puberty and in adulthood. Analysis of the transduction pathways activated by the receptor identifies coupling to phospholipase C and intracellular calcium release through pertussis toxin-insensitive G(q) proteins. The sequence is that of KiSS-1 receptor (Kiss1r) from Mus musculus (Mouse).